Reading from the N-terminus, the 367-residue chain is MFNLLPAFSLGVLLIVMEGRGSAVNTPASRPVTRKSKSYGRSCVEAPSYFWQTPGHLTVLKVPTSRGAAKSQIITNKVDPEHIALLVKNEWKLSYVTPLHHFRHTQLKSYAKHLSAFIVAEKQQGVAVEVGLDAGFKVTFTAVLGLAETDEDAETVFIQIQSKPVFAAAADAPKVVWRGWLTCVNGDPEYLRSLPPDFVSLPLFCTSGPESLTNLVKSWFERAFDCNFGSLALNSSTLNWLAALWTGCHPACNIRYLKLSWSLPTEPPLDVLYTVNPQDAWELWNSIHPQENTDDRIDIKDVQAFMSGMETHFFRHFKIHLSAGTLLKVSTALGSAHHDGKIKIGNSDYITTLLALLTECALLKMPT.

The protein belongs to the CENP-L/IML3 family.

The protein localises to the nucleus. The protein resides in the chromosome. It localises to the centromere. Probable component of a centromeric complex involved in assembly of kinetochore proteins, mitotic progression and chromosome segregation. In Danio rerio (Zebrafish), this protein is Centromere protein L (cenpl).